The chain runs to 480 residues: Glycogen synthase (480 aa).

Residue Lys-15 coordinates ADP-alpha-D-glucose.

The protein belongs to the glycosyltransferase 1 family. Bacterial/plant glycogen synthase subfamily.

The catalysed reaction is [(1-&gt;4)-alpha-D-glucosyl](n) + ADP-alpha-D-glucose = [(1-&gt;4)-alpha-D-glucosyl](n+1) + ADP + H(+). It participates in glycan biosynthesis; glycogen biosynthesis. Its function is as follows. Synthesizes alpha-1,4-glucan chains using ADP-glucose. This chain is Glycogen synthase, found in Rhizobium leguminosarum bv. trifolii (strain WSM2304).